Consider the following 182-residue polypeptide: ATP synthase subunit delta (182 aa).

The protein belongs to the ATPase delta chain family. F-type ATPases have 2 components, F(1) - the catalytic core - and F(0) - the membrane proton channel. F(1) has five subunits: alpha(3), beta(3), gamma(1), delta(1), epsilon(1). F(0) has three main subunits: a(1), b(2) and c(10-14). The alpha and beta chains form an alternating ring which encloses part of the gamma chain. F(1) is attached to F(0) by a central stalk formed by the gamma and epsilon chains, while a peripheral stalk is formed by the delta and b chains.

Its subcellular location is the cell membrane. Its activity is regulated as follows. Increases 2-fold following exposure to low pH. Its function is as follows. F(1)F(0) ATP synthase produces ATP from ADP in the presence of a proton or sodium gradient. F-type ATPases consist of two structural domains, F(1) containing the extramembraneous catalytic core and F(0) containing the membrane proton channel, linked together by a central stalk and a peripheral stalk. During catalysis, ATP synthesis in the catalytic domain of F(1) is coupled via a rotary mechanism of the central stalk subunits to proton translocation. Functionally, this protein is part of the stalk that links CF(0) to CF(1). It either transmits conformational changes from CF(0) to CF(1) or is implicated in proton conduction. This is ATP synthase subunit delta from Lactobacillus acidophilus (strain ATCC 700396 / NCK56 / N2 / NCFM).